Here is a 104-residue protein sequence, read N- to C-terminus: Protein KleF (104 aa).

This is Protein KleF (kleF) from Escherichia coli.